Reading from the N-terminus, the 343-residue chain is Cyclin-Y-like protein 1-B (343 aa).

Residues 1–69 (MGNTVTCCVS…ECNPSDHPQA (69 aa)) are disordered. A compositionally biased stretch (basic and acidic residues) spans 17-28 (AGRDRRVAERGE). The Cyclin N-terminal domain occupies 145 to 267 (DIFDEKLHPL…FLELLQFNIN (123 aa)).

The protein belongs to the cyclin family. Cyclin Y subfamily.

This is Cyclin-Y-like protein 1-B (ccnyl1-b) from Xenopus laevis (African clawed frog).